The chain runs to 309 residues: Anamorsin (309 aa).

An N-terminal SAM-like domain region spans residues 6-172 (ISPGQLVAVF…KPNFEVGSSS (167 aa)). The tract at residues 173-222 (QLKLLHKKSSSVKPVVDPATAKLWTLSANDMEDDSMDLIDSDELLDPEDL) is linker. A phosphoserine mark is found at S182, S183, and S213. Positions 235, 244, 247, and 249 each coordinate [2Fe-2S] cluster. The segment at 235 to 249 (CGEGKKRKACKNCTC) is fe-S binding site A. S269 carries the post-translational modification Phosphoserine. Positions 271, 274, 282, and 285 each coordinate [4Fe-4S] cluster. 2 consecutive short sequence motifs (cx2C motif) follow at residues 271–274 (CGNC) and 282–285 (CANC). Residues 271–285 (CGNCYLGDAFRCANC) form a fe-S binding site B region. S302 and S304 each carry phosphoserine.

This sequence belongs to the anamorsin family. Monomer. Interacts with NDOR1. Interacts with CHCHD4. Requires [2Fe-2S] cluster as cofactor. It depends on [4Fe-4S] cluster as a cofactor.

The protein localises to the cytoplasm. It localises to the nucleus. Its subcellular location is the mitochondrion intermembrane space. Its function is as follows. Component of the cytosolic iron-sulfur (Fe-S) protein assembly (CIA) machinery required for the maturation of extramitochondrial Fe-S proteins. Part of an electron transfer chain functioning in an early step of cytosolic Fe-S biogenesis, facilitating the de novo assembly of a [4Fe-4S] cluster on the scaffold complex NUBP1-NUBP2. Electrons are transferred to CIAPIN1 from NADPH via the FAD- and FMN-containing protein NDOR1. NDOR1-CIAPIN1 are also required for the assembly of the diferric tyrosyl radical cofactor of ribonucleotide reductase (RNR), probably by providing electrons for reduction during radical cofactor maturation in the catalytic small subunit. Has anti-apoptotic effects in the cell. Involved in negative control of cell death upon cytokine withdrawal. Promotes development of hematopoietic cells. The protein is Anamorsin of Rattus norvegicus (Rat).